Here is a 284-residue protein sequence, read N- to C-terminus: 2-dehydro-3-deoxyphosphooctonate aldolase (284 aa).

The protein belongs to the KdsA family.

The protein resides in the cytoplasm. It catalyses the reaction D-arabinose 5-phosphate + phosphoenolpyruvate + H2O = 3-deoxy-alpha-D-manno-2-octulosonate-8-phosphate + phosphate. It participates in carbohydrate biosynthesis; 3-deoxy-D-manno-octulosonate biosynthesis; 3-deoxy-D-manno-octulosonate from D-ribulose 5-phosphate: step 2/3. It functions in the pathway bacterial outer membrane biogenesis; lipopolysaccharide biosynthesis. The polypeptide is 2-dehydro-3-deoxyphosphooctonate aldolase (Actinobacillus succinogenes (strain ATCC 55618 / DSM 22257 / CCUG 43843 / 130Z)).